The following is a 179-amino-acid chain: Acireductone dioxygenase (179 aa).

The interval 1-21 (MVQAWYMDDSTEDQRKPHHLQ) is disordered. The Fe(2+) site is built by histidine 88, histidine 90, glutamate 94, and histidine 133. The Ni(2+) site is built by histidine 88, histidine 90, glutamate 94, and histidine 133.

The protein belongs to the acireductone dioxygenase (ARD) family. Monomer. Interacts with MMP14. Fe(2+) is required as a cofactor. The cofactor is Ni(2+).

The protein resides in the cytoplasm. The protein localises to the nucleus. It is found in the cell membrane. It catalyses the reaction 1,2-dihydroxy-5-(methylsulfanyl)pent-1-en-3-one + O2 = 4-methylsulfanyl-2-oxobutanoate + formate + 2 H(+). The enzyme catalyses 1,2-dihydroxy-5-(methylsulfanyl)pent-1-en-3-one + O2 = 3-(methylsulfanyl)propanoate + CO + formate + 2 H(+). Its pathway is amino-acid biosynthesis; L-methionine biosynthesis via salvage pathway; L-methionine from S-methyl-5-thio-alpha-D-ribose 1-phosphate: step 5/6. Catalyzes 2 different reactions between oxygen and the acireductone 1,2-dihydroxy-3-keto-5-methylthiopentene (DHK-MTPene) depending upon the metal bound in the active site. Fe-containing acireductone dioxygenase (Fe-ARD) produces formate and 2-keto-4-methylthiobutyrate (KMTB), the alpha-ketoacid precursor of methionine in the methionine recycle pathway. Ni-containing acireductone dioxygenase (Ni-ARD) produces methylthiopropionate, carbon monoxide and formate, and does not lie on the methionine recycle pathway. This Xenopus tropicalis (Western clawed frog) protein is Acireductone dioxygenase (adi1).